We begin with the raw amino-acid sequence, 197 residues long: Mediator of RNA polymerase II transcription subunit 21 (197 aa).

The segment at 37–112 (PPPSVPSAVP…APPRPDSPNT (76 aa)) is disordered. Low complexity-rich tracts occupy residues 60–70 (PTSGTATNTPG) and 90–100 (PQMQQQHQEQP). Residues 140 to 183 (GIKSSEAEQQERIKQLAEELRVVEEERSARRRELRRLGEKVDGL) adopt a coiled-coil conformation.

Belongs to the Mediator complex subunit 21 family. Component of the Mediator complex.

The protein resides in the nucleus. Component of the Mediator complex, a coactivator involved in the regulated transcription of nearly all RNA polymerase II-dependent genes. Mediator functions as a bridge to convey information from gene-specific regulatory proteins to the basal RNA polymerase II transcription machinery. Mediator is recruited to promoters by direct interactions with regulatory proteins and serves as a scaffold for the assembly of a functional preinitiation complex with RNA polymerase II and the general transcription factors. This chain is Mediator of RNA polymerase II transcription subunit 21 (SRB7), found in Coccidioides immitis (strain RS) (Valley fever fungus).